The following is a 118-amino-acid chain: BolA-like protein 3 (118 aa).

Belongs to the BolA/IbaG family. In terms of assembly, interacts with NFU1.

Its subcellular location is the mitochondrion matrix. In terms of biological role, acts as a mitochondrial iron-sulfur (Fe-S) cluster assembly factor that facilitates [4Fe-4S] cluster insertion into a subset of mitochondrial proteins such as lipoyl synthase (LS) and succinate dehydrogenase (SDH). Required during the last step of iron-sulfur protein assembly when the iron-sulfur cluster is inserted into the target protein. Acts together with NFU1, later than BOL1 and GRX5 in the [4Fe-4S] cluster insertion process. Not required for [2Fe-2S] cluster insertion into mitochondrial proteins. This Saccharomyces cerevisiae (strain ATCC 204508 / S288c) (Baker's yeast) protein is BolA-like protein 3.